The primary structure comprises 235 residues: Uridylate kinase (235 aa).

ATP is bound at residue 8–11 (KFSG). The segment at 16-21 (GKEGYG) is involved in allosteric activation by GTP. Residue Gly50 participates in UMP binding. Residues Gly51 and Arg55 each coordinate ATP. UMP-binding positions include Asp71 and 132-139 (TGNPYFTT). Positions 159, 165, and 168 each coordinate ATP.

Belongs to the UMP kinase family. Homohexamer.

It is found in the cytoplasm. It carries out the reaction UMP + ATP = UDP + ADP. It participates in pyrimidine metabolism; CTP biosynthesis via de novo pathway; UDP from UMP (UMPK route): step 1/1. Allosterically activated by GTP. Inhibited by UTP. In terms of biological role, catalyzes the reversible phosphorylation of UMP to UDP. This Sulfurovum sp. (strain NBC37-1) protein is Uridylate kinase.